The following is a 291-amino-acid chain: Glycine--tRNA ligase alpha subunit (291 aa).

The protein belongs to the class-II aminoacyl-tRNA synthetase family. In terms of assembly, tetramer of two alpha and two beta subunits.

Its subcellular location is the cytoplasm. It carries out the reaction tRNA(Gly) + glycine + ATP = glycyl-tRNA(Gly) + AMP + diphosphate. The polypeptide is Glycine--tRNA ligase alpha subunit (Geotalea uraniireducens (strain Rf4) (Geobacter uraniireducens)).